The primary structure comprises 123 residues: Fluoride-specific ion channel FluC 2 (123 aa).

2 helical membrane passes run 1–21 and 30–50; these read MTML…FLLD and VPVP…LGLI. Gly-74 and Thr-77 together coordinate Na(+). The chain crosses the membrane as a helical span at residues 99-119; it reads ALHCMGMAIAGVLAAILGLAL.

The protein belongs to the fluoride channel Fluc/FEX (TC 1.A.43) family.

The protein localises to the cell membrane. The catalysed reaction is fluoride(in) = fluoride(out). With respect to regulation, na(+) is not transported, but it plays an essential structural role and its presence is essential for fluoride channel function. Functionally, fluoride-specific ion channel. Important for reducing fluoride concentration in the cell, thus reducing its toxicity. This Cutibacterium acnes (strain DSM 16379 / KPA171202) (Propionibacterium acnes) protein is Fluoride-specific ion channel FluC 2.